A 352-amino-acid chain; its full sequence is Decapping nuclease din1 (352 aa).

Residues Arg-33 and 93–95 (WRG) contribute to the substrate site. Residue Glu-150 participates in a divalent metal cation binding. Substrate is bound by residues Cys-182 and Glu-199. Asp-201 serves as a coordination point for a divalent metal cation. Position 218 is a phosphoserine (Ser-218). A divalent metal cation contacts are provided by Glu-239 and Leu-240. Residues Lys-241 and Gln-263 each coordinate substrate.

It belongs to the DXO/Dom3Z family. As to quaternary structure, interacts with dhp1/Rat1; the interaction is direct, stabilizes dhp1 protein structure and stimulates its exoribonuclease activity. The interaction also stimulates din1 pyrophosphohydrolase activity, probably by recruiting it to mRNA substrates. A divalent metal cation serves as cofactor.

It localises to the nucleus. It catalyses the reaction a 5'-end NAD(+)-phospho-ribonucleoside in mRNA + H2O = a 5'-end phospho-ribonucleoside in mRNA + NAD(+) + H(+). It carries out the reaction a 5'-end (N(7)-methyl 5'-triphosphoguanosine)-ribonucleoside-ribonucleotide in mRNA + H2O = a (N(7)-methyl 5'-triphosphoguanosine)-nucleoside + a 5'-end phospho-ribonucleoside in mRNA + H(+). The catalysed reaction is a 5'-end triphospho-ribonucleoside in mRNA + H2O = a 5'-end phospho-ribonucleoside in mRNA + diphosphate + H(+). Its function is as follows. Decapping enzyme for NAD-capped RNAs: specifically hydrolyzes the nicotinamide adenine dinucleotide (NAD) cap from a subset of RNAs by removing the entire NAD moiety from the 5'-end of an NAD-capped RNA. The NAD-cap is present at the 5'-end of some RNAs and snoRNAs. In contrast to the canonical 5'-end N7 methylguanosine (m7G) cap, the NAD cap promotes mRNA decay. Also acts as a non-canonical decapping enzyme that removes the entire cap structure of m7G capped or incompletely capped RNAs and mediates their subsequent degradation. Specifically degrades pre-mRNAs with a defective m7G cap and is part of a pre-mRNA capping quality control. Has decapping activity toward incomplete 5'-end m7G cap mRNAs such as unmethylated 5'-end-capped RNA (cap0), while it has no activity toward 2'-O-ribose methylated m7G cap (cap1). Also possesses RNA 5'-pyrophosphohydrolase activity by hydrolyzing the 5'-end triphosphate to release pyrophosphates. Stimulates exoribonuclease activity of dhp1, allowing it to degrade RNAs with stable secondary structure more effectively. In Schizosaccharomyces pombe (strain 972 / ATCC 24843) (Fission yeast), this protein is Decapping nuclease din1.